The primary structure comprises 184 residues: ATP synthase subunit b, chloroplastic (184 aa).

A helical membrane pass occupies residues 27 to 49; the sequence is FATNPINLSVVLGVLIFFGKGVL.

Belongs to the ATPase B chain family. As to quaternary structure, F-type ATPases have 2 components, F(1) - the catalytic core - and F(0) - the membrane proton channel. F(1) has five subunits: alpha(3), beta(3), gamma(1), delta(1), epsilon(1). F(0) has four main subunits: a(1), b(1), b'(1) and c(10-14). The alpha and beta chains form an alternating ring which encloses part of the gamma chain. F(1) is attached to F(0) by a central stalk formed by the gamma and epsilon chains, while a peripheral stalk is formed by the delta, b and b' chains.

The protein resides in the plastid. It is found in the chloroplast thylakoid membrane. In terms of biological role, f(1)F(0) ATP synthase produces ATP from ADP in the presence of a proton or sodium gradient. F-type ATPases consist of two structural domains, F(1) containing the extramembraneous catalytic core and F(0) containing the membrane proton channel, linked together by a central stalk and a peripheral stalk. During catalysis, ATP synthesis in the catalytic domain of F(1) is coupled via a rotary mechanism of the central stalk subunits to proton translocation. Component of the F(0) channel, it forms part of the peripheral stalk, linking F(1) to F(0). In Ipomoea purpurea (Common morning glory), this protein is ATP synthase subunit b, chloroplastic.